Here is a 116-residue protein sequence, read N- to C-terminus: Small ribosomal subunit protein uS13 (116 aa).

The disordered stretch occupies residues 88–116; the sequence is GSRHKKGLPVRGQHTKNNARTRKGPRKQA.

Belongs to the universal ribosomal protein uS13 family. Part of the 30S ribosomal subunit. Forms a loose heterodimer with protein S19. Forms two bridges to the 50S subunit in the 70S ribosome.

Located at the top of the head of the 30S subunit, it contacts several helices of the 16S rRNA. In the 70S ribosome it contacts the 23S rRNA (bridge B1a) and protein L5 of the 50S subunit (bridge B1b), connecting the 2 subunits; these bridges are implicated in subunit movement. Contacts the tRNAs in the A and P-sites. This is Small ribosomal subunit protein uS13 from Finegoldia magna (strain ATCC 29328 / DSM 20472 / WAL 2508) (Peptostreptococcus magnus).